A 292-amino-acid polypeptide reads, in one-letter code: MSQDVNELSKQPTPDKAEDNAFFPSPYSLSQYTAPKTDFDGVEHKGAYKDGKWKVLMIAAEERYVLLENGKMFSTGNHPVEMLLPLHHLMEAGFDVDVATLSGYPAKLELWAMPTEDEAVITTYNKLKEKLKQPKKLADVIKNELGPDSDYLSVFIPGGHAAVVGISESEDVQKTLDWALENDRFIVTLCHGPAALLSAGLNREKSPLEGYSVCVFPDSLDEGANIEIGYLPGRLKWLVAELLTKQGLKVVNDDMTGRTLKDRKLLTGDSPLASNELGKLAVNEMLNAIQNK.

Residues 1-12 (MSQDVNELSKQP) show a composition bias toward polar residues. Residues 1-23 (MSQDVNELSKQPTPDKAEDNAFF) form a disordered region. The Nucleophile role is filled by C190.

It belongs to the peptidase C56 family. HchA subfamily.

The protein localises to the cytoplasm. It catalyses the reaction N(omega)-(1-hydroxy-2-oxopropyl)-L-arginyl-[protein] + H2O = lactate + L-arginyl-[protein] + H(+). The catalysed reaction is N(6)-(1-hydroxy-2-oxopropyl)-L-lysyl-[protein] + H2O = lactate + L-lysyl-[protein] + H(+). The enzyme catalyses S-(1-hydroxy-2-oxopropyl)-L-cysteinyl-[protein] + H2O = lactate + L-cysteinyl-[protein] + H(+). It carries out the reaction N(omega)-(1-hydroxy-2-oxoethyl)-L-arginyl-[protein] + H2O = L-arginyl-[protein] + glycolate + H(+). It catalyses the reaction N(6)-(1-hydroxy-2-oxoethyl)-L-lysyl-[protein] + H2O = glycolate + L-lysyl-[protein] + H(+). The catalysed reaction is S-(1-hydroxy-2-oxoethyl)-L-cysteinyl-[protein] + H2O = glycolate + L-cysteinyl-[protein] + H(+). The enzyme catalyses N(2)-(1-hydroxy-2-oxopropyl)-dGTP + H2O = lactate + dGTP + H(+). It carries out the reaction N(2)-(1-hydroxy-2-oxopropyl)-GTP + H2O = lactate + GTP + H(+). It catalyses the reaction N(2)-(1-hydroxy-2-oxopropyl)-GDP + H2O = lactate + GDP + H(+). The catalysed reaction is N(2)-(1-hydroxy-2-oxopropyl)-GMP + H2O = lactate + GMP + H(+). The enzyme catalyses N(2)-(1-hydroxy-2-oxoethyl)-dGTP + H2O = dGTP + glycolate + H(+). It carries out the reaction N(2)-(1-hydroxy-2-oxoethyl)-GTP + H2O = glycolate + GTP + H(+). It catalyses the reaction N(2)-(1-hydroxy-2-oxoethyl)-GDP + H2O = glycolate + GDP + H(+). The catalysed reaction is N(2)-(1-hydroxy-2-oxoethyl)-GMP + H2O = glycolate + GMP + H(+). The enzyme catalyses an N(2)-(1-hydroxy-2-oxopropyl)-guanosine in RNA + H2O = a guanosine in RNA + lactate + H(+). It carries out the reaction an N(2)-(1-hydroxy-2-oxopropyl)-2'-deoxyguanosine in DNA + H2O = a 2'-deoxyguanosine in DNA + lactate + H(+). It catalyses the reaction an N(2)-(1-hydroxy-2-oxoethyl)-guanosine in RNA + H2O = a guanosine in RNA + glycolate + H(+). The catalysed reaction is an N(2)-(1-hydroxy-2-oxoethyl)-2'-deoxyguanosine in DNA + H2O = a 2'-deoxyguanosine in DNA + glycolate + H(+). Protein and nucleotide deglycase that catalyzes the deglycation of the Maillard adducts formed between amino groups of proteins or nucleotides and reactive carbonyl groups of glyoxals. Thus, functions as a protein deglycase that repairs methylglyoxal- and glyoxal-glycated proteins, and releases repaired proteins and lactate or glycolate, respectively. Deglycates cysteine, arginine and lysine residues in proteins, and thus reactivates these proteins by reversing glycation by glyoxals. Acts on early glycation intermediates (hemithioacetals and aminocarbinols), preventing the formation of Schiff bases and advanced glycation endproducts (AGE). Also functions as a nucleotide deglycase able to repair glycated guanine in the free nucleotide pool (GTP, GDP, GMP, dGTP) and in DNA and RNA. Is thus involved in a major nucleotide repair system named guanine glycation repair (GG repair), dedicated to reversing methylglyoxal and glyoxal damage via nucleotide sanitization and direct nucleic acid repair. Plays an important role in protecting cells from carbonyl stress. This is Protein/nucleic acid deglycase HchA from Staphylococcus aureus (strain bovine RF122 / ET3-1).